Here is a 356-residue protein sequence, read N- to C-terminus: DNA integrity scanning protein DisA (356 aa).

Residues 11–149 (VHTMRDTLQR…EGKSHILEEP (139 aa)) form the DAC domain. ATP contacts are provided by residues Gly78, Leu96, and 109-113 (TRHRS).

This sequence belongs to the DisA family. Homooctamer. Requires Mg(2+) as cofactor.

It catalyses the reaction 2 ATP = 3',3'-c-di-AMP + 2 diphosphate. Functionally, participates in a DNA-damage check-point. DisA forms globular foci that rapidly scan along the chromosomes searching for lesions. In terms of biological role, also has diadenylate cyclase activity, catalyzing the condensation of 2 ATP molecules into cyclic di-AMP (c-di-AMP). c-di-AMP likely acts as a signaling molecule that may couple DNA integrity with a cellular process. This Corynebacterium efficiens (strain DSM 44549 / YS-314 / AJ 12310 / JCM 11189 / NBRC 100395) protein is DNA integrity scanning protein DisA.